A 1857-amino-acid chain; its full sequence is U3 small nucleolar RNA-associated protein 10 (1857 aa).

Residues leucine 267–valine 287 traverse the membrane as a helical segment. Residues leucine 1817–tyrosine 1855 form an HEAT repeat.

Belongs to the HEATR1/UTP10 family. In terms of assembly, component of the ribosomal small subunit (SSU) processome.

It localises to the nucleus. The protein resides in the nucleolus. Its subcellular location is the membrane. In terms of biological role, involved in nucleolar processing of pre-18S ribosomal RNA. Involved in ribosome biosynthesis. The polypeptide is U3 small nucleolar RNA-associated protein 10 (Debaryomyces hansenii (strain ATCC 36239 / CBS 767 / BCRC 21394 / JCM 1990 / NBRC 0083 / IGC 2968) (Yeast)).